The sequence spans 347 residues: NADH-ubiquinone oxidoreductase chain 2 (347 aa).

The next 11 helical transmembrane spans lie at P3–S23, H25–M45, Y59–M79, I96–P116, G127–P147, L149–G169, I178–P198, S201–I221, I239–G259, N274–M294, and T326–L346.

It belongs to the complex I subunit 2 family. Core subunit of respiratory chain NADH dehydrogenase (Complex I) which is composed of 45 different subunits. Interacts with TMEM242.

It localises to the mitochondrion inner membrane. The catalysed reaction is a ubiquinone + NADH + 5 H(+)(in) = a ubiquinol + NAD(+) + 4 H(+)(out). In terms of biological role, core subunit of the mitochondrial membrane respiratory chain NADH dehydrogenase (Complex I) which catalyzes electron transfer from NADH through the respiratory chain, using ubiquinone as an electron acceptor. Essential for the catalytic activity and assembly of complex I. The polypeptide is NADH-ubiquinone oxidoreductase chain 2 (Sylvisorex ollula (Greater forest shrew)).